A 381-amino-acid polypeptide reads, in one-letter code: MAINIRKTHPLLKIMNHALVDLPAPSNISLWWNFGSLLGLCLIIQILTGLFLAMHYTADISMAFSSVVHICRDVNYGWLIRNIHANGASLFFICVYLHIARGLYYGSYLYKETWNIGVILLFLLMATAFVGYVLPWGQMSFWGATVITNLLSAFPYIGDMLVQWIWGGFSVDNATLTRFFAFHFLLPFLILALTIIHLLFLHETGSNNPLGINSDADKISFHPYFSYKDLLGFFVMIFFLAVFALFMPNLLGDAENFIPANPLVTPPHIKPEWYFLFAYAILRSIPNKLGGVLALLFSIFILMLVPLLHTSKQRSTIFRPMTQIFFWLLVANSIILTWIGGQPVEQPFIMVGQIASISYFSLFLIIMPLTSWWENKILSLN.

Helical transmembrane passes span 34-54 (FGSL…FLAM), 78-99 (WLIR…YLHI), 114-134 (WNIG…GYVL), and 179-199 (FFAF…IHLL). Positions 84 and 98 each coordinate heme b. The heme b site is built by H183 and H197. H202 contributes to the a ubiquinone binding site. The next 4 helical transmembrane spans lie at 227 to 247 (YKDL…ALFM), 289 to 309 (LGGV…PLLH), 321 to 341 (MTQI…WIGG), and 348 to 368 (FIMV…IIMP).

It belongs to the cytochrome b family. In terms of assembly, the cytochrome bc1 complex contains 3 respiratory subunits (MT-CYB, CYC1 and UQCRFS1), 2 core proteins (UQCRC1 and UQCRC2) and probably 6 low-molecular weight proteins. It depends on heme b as a cofactor.

It is found in the mitochondrion inner membrane. In terms of biological role, component of the ubiquinol-cytochrome c reductase complex (complex III or cytochrome b-c1 complex) that is part of the mitochondrial respiratory chain. The b-c1 complex mediates electron transfer from ubiquinol to cytochrome c. Contributes to the generation of a proton gradient across the mitochondrial membrane that is then used for ATP synthesis. This is Cytochrome b (mt-cyb) from Carcharhinus plumbeus (Sandbar shark).